We begin with the raw amino-acid sequence, 209 residues long: Uracil phosphoribosyltransferase (209 aa).

Residues Arg-79, Arg-104, and 131–139 (DPMLATGGS) each bind 5-phospho-alpha-D-ribose 1-diphosphate. Uracil-binding positions include Ile-194 and 199–201 (GDA). 5-phospho-alpha-D-ribose 1-diphosphate is bound at residue Asp-200.

This sequence belongs to the UPRTase family. Mg(2+) serves as cofactor.

The enzyme catalyses UMP + diphosphate = 5-phospho-alpha-D-ribose 1-diphosphate + uracil. The protein operates within pyrimidine metabolism; UMP biosynthesis via salvage pathway; UMP from uracil: step 1/1. With respect to regulation, allosterically activated by GTP. Functionally, catalyzes the conversion of uracil and 5-phospho-alpha-D-ribose 1-diphosphate (PRPP) to UMP and diphosphate. The chain is Uracil phosphoribosyltransferase from Streptococcus mutans serotype c (strain ATCC 700610 / UA159).